The primary structure comprises 229 residues: Large ribosomal subunit protein uL1 (229 aa).

Belongs to the universal ribosomal protein uL1 family. As to quaternary structure, part of the 50S ribosomal subunit.

Binds directly to 23S rRNA. The L1 stalk is quite mobile in the ribosome, and is involved in E site tRNA release. Functionally, protein L1 is also a translational repressor protein, it controls the translation of the L11 operon by binding to its mRNA. The polypeptide is Large ribosomal subunit protein uL1 (Streptococcus pyogenes serotype M3 (strain SSI-1)).